A 185-amino-acid chain; its full sequence is Guanylate kinase (185 aa).

Residues 3–181 (TRMIIVAAPS…SYGEFKKIVE (179 aa)) form the Guanylate kinase-like domain. Residue 10–17 (APSGAGKS) coordinates ATP.

The protein belongs to the guanylate kinase family.

The protein localises to the cytoplasm. The enzyme catalyses GMP + ATP = GDP + ADP. Its function is as follows. Essential for recycling GMP and indirectly, cGMP. The sequence is that of Guanylate kinase from Bdellovibrio bacteriovorus (strain ATCC 15356 / DSM 50701 / NCIMB 9529 / HD100).